The sequence spans 101 residues: Co-chaperonin GroES (101 aa).

This sequence belongs to the GroES chaperonin family. Heptamer of 7 subunits arranged in a ring. Interacts with the chaperonin GroEL.

It localises to the cytoplasm. In terms of biological role, together with the chaperonin GroEL, plays an essential role in assisting protein folding. The GroEL-GroES system forms a nano-cage that allows encapsulation of the non-native substrate proteins and provides a physical environment optimized to promote and accelerate protein folding. GroES binds to the apical surface of the GroEL ring, thereby capping the opening of the GroEL channel. The polypeptide is Co-chaperonin GroES (Lawsonia intracellularis).